A 397-amino-acid chain; its full sequence is Argininosuccinate synthase (397 aa).

Residue 9–17 participates in ATP binding; that stretch reads AYSGGLDTS. Tyr-86 contacts L-citrulline. Residue Gly-116 coordinates ATP. The L-aspartate site is built by Thr-118, Asn-122, and Asp-123. Position 122 (Asn-122) interacts with L-citrulline. 4 residues coordinate L-citrulline: Arg-126, Ser-174, Glu-259, and Tyr-271.

Belongs to the argininosuccinate synthase family. Type 1 subfamily. Homotetramer.

It localises to the cytoplasm. The enzyme catalyses L-citrulline + L-aspartate + ATP = 2-(N(omega)-L-arginino)succinate + AMP + diphosphate + H(+). The protein operates within amino-acid biosynthesis; L-arginine biosynthesis; L-arginine from L-ornithine and carbamoyl phosphate: step 2/3. The sequence is that of Argininosuccinate synthase from Lactococcus lactis subsp. cremoris (strain MG1363).